The chain runs to 338 residues: Holliday junction branch migration complex subunit RuvB (338 aa).

Residues 4–187 form a large ATPase domain (RuvB-L) region; sequence ADRLIHAEPQ…FGIPLRLEFY (184 aa). ATP is bound by residues R27, G68, K71, T72, T73, 134–136, R177, Y187, and R224; that span reads EDY. T72 is a Mg(2+) binding site. Positions 188 to 258 are small ATPAse domain (RuvB-S); it reads NVKDLSSIVT…VAELALDMLD (71 aa). Residues 261-338 form a head domain (RuvB-H) region; that stretch reads SEGFDYMDRK…RHFDIIQPEK (78 aa). The DNA site is built by R297, R316, and R321.

Belongs to the RuvB family. As to quaternary structure, homohexamer. Forms an RuvA(8)-RuvB(12)-Holliday junction (HJ) complex. HJ DNA is sandwiched between 2 RuvA tetramers; dsDNA enters through RuvA and exits via RuvB. An RuvB hexamer assembles on each DNA strand where it exits the tetramer. Each RuvB hexamer is contacted by two RuvA subunits (via domain III) on 2 adjacent RuvB subunits; this complex drives branch migration. In the full resolvosome a probable DNA-RuvA(4)-RuvB(12)-RuvC(2) complex forms which resolves the HJ.

It is found in the cytoplasm. It catalyses the reaction ATP + H2O = ADP + phosphate + H(+). In terms of biological role, the RuvA-RuvB-RuvC complex processes Holliday junction (HJ) DNA during genetic recombination and DNA repair, while the RuvA-RuvB complex plays an important role in the rescue of blocked DNA replication forks via replication fork reversal (RFR). RuvA specifically binds to HJ cruciform DNA, conferring on it an open structure. The RuvB hexamer acts as an ATP-dependent pump, pulling dsDNA into and through the RuvAB complex. RuvB forms 2 homohexamers on either side of HJ DNA bound by 1 or 2 RuvA tetramers; 4 subunits per hexamer contact DNA at a time. Coordinated motions by a converter formed by DNA-disengaged RuvB subunits stimulates ATP hydrolysis and nucleotide exchange. Immobilization of the converter enables RuvB to convert the ATP-contained energy into a lever motion, pulling 2 nucleotides of DNA out of the RuvA tetramer per ATP hydrolyzed, thus driving DNA branch migration. The RuvB motors rotate together with the DNA substrate, which together with the progressing nucleotide cycle form the mechanistic basis for DNA recombination by continuous HJ branch migration. Branch migration allows RuvC to scan DNA until it finds its consensus sequence, where it cleaves and resolves cruciform DNA. This chain is Holliday junction branch migration complex subunit RuvB, found in Shewanella woodyi (strain ATCC 51908 / MS32).